The primary structure comprises 127 residues: Fluoride-specific ion channel FluC (127 aa).

A run of 4 helical transmembrane segments spans residues 4–24 (LLLA…LLSM), 35–55 (LGTL…FAWF), 71–91 (TGFC…VFLL), and 103–123 (VFVN…LFSA). Residues glycine 75 and threonine 78 each coordinate Na(+).

Belongs to the fluoride channel Fluc/FEX (TC 1.A.43) family.

The protein localises to the cell inner membrane. The catalysed reaction is fluoride(in) = fluoride(out). With respect to regulation, na(+) is not transported, but it plays an essential structural role and its presence is essential for fluoride channel function. Functionally, fluoride-specific ion channel. Important for reducing fluoride concentration in the cell, thus reducing its toxicity. In Escherichia coli O8 (strain IAI1), this protein is Fluoride-specific ion channel FluC.